Reading from the N-terminus, the 387-residue chain is MEKVVIVDAIRTPMGRSKGGAFRHVRAEDLSAHLMRSLLSRNPSVDPATLDDIYWGCVQQTLEQGFNIARNAALLAEIPHSVPATTVNRLCGSSMQALHDAARAIMVGDARTCLIGGVEHMGHVPMSHGVDFHPGLSRNVAKAAGMMGLTAEMLARMHGISREMQDRFAARSHQRAAAATQAGHFAAEIVAVCGHDADGVLKRYDADEVIRPETTVESLMALRPAFDPVDGTVTAGSSSALSDGAAAMLIMSGSQARQQGLKARARIRSMAVVGCDPSIMGYGPVPASQLALKRAGLSIADIGVFELNEAFAAQTLPCIKDLGLMDKLDEKVNLNGGAIALGHPLGCSGARISTTLLNLMERRDAQFGLATMCIGLGQGIATVFERI.

Residue C91 is the Acyl-thioester intermediate of the active site. Residues H343 and C373 each act as proton acceptor in the active site.

The protein belongs to the thiolase-like superfamily. Thiolase family. As to quaternary structure, heterotetramer of two alpha chains (FadB) and two beta chains (FadA).

It is found in the cytoplasm. The enzyme catalyses an acyl-CoA + acetyl-CoA = a 3-oxoacyl-CoA + CoA. It participates in lipid metabolism; fatty acid beta-oxidation. Functionally, catalyzes the final step of fatty acid oxidation in which acetyl-CoA is released and the CoA ester of a fatty acid two carbons shorter is formed. This chain is 3-ketoacyl-CoA thiolase, found in Erwinia tasmaniensis (strain DSM 17950 / CFBP 7177 / CIP 109463 / NCPPB 4357 / Et1/99).